The following is a 667-amino-acid chain: DNA ligase (667 aa).

NAD(+)-binding positions include D32–D36, S81–L82, and E110. The N6-AMP-lysine intermediate role is filled by K112. The NAD(+) site is built by R133, E167, K283, and K307. Residues C401, C404, C419, and C424 each contribute to the Zn(2+) site. Residues E586 to S667 form the BRCT domain.

It belongs to the NAD-dependent DNA ligase family. LigA subfamily. Requires Mg(2+) as cofactor. Mn(2+) is required as a cofactor.

The enzyme catalyses NAD(+) + (deoxyribonucleotide)n-3'-hydroxyl + 5'-phospho-(deoxyribonucleotide)m = (deoxyribonucleotide)n+m + AMP + beta-nicotinamide D-nucleotide.. DNA ligase that catalyzes the formation of phosphodiester linkages between 5'-phosphoryl and 3'-hydroxyl groups in double-stranded DNA using NAD as a coenzyme and as the energy source for the reaction. It is essential for DNA replication and repair of damaged DNA. This Staphylococcus aureus (strain bovine RF122 / ET3-1) protein is DNA ligase.